Here is a 261-residue protein sequence, read N- to C-terminus: 5'-nucleotidase SurE (261 aa).

A divalent metal cation contacts are provided by aspartate 8, aspartate 9, serine 40, and asparagine 94.

Belongs to the SurE nucleotidase family. A divalent metal cation is required as a cofactor.

The protein localises to the cytoplasm. The catalysed reaction is a ribonucleoside 5'-phosphate + H2O = a ribonucleoside + phosphate. Functionally, nucleotidase that shows phosphatase activity on nucleoside 5'-monophosphates. In Anaplasma marginale (strain St. Maries), this protein is 5'-nucleotidase SurE.